The sequence spans 393 residues: MTTFDRGEKPDIGTLVAFDHVRFVVGNAKQAAYWYCANFGFEPFAYKGLETGSRITAQHAIKQDKIVFVFESALLPDNTELGEHLVQHGDGVKDVCFEVEDLDSIVAHAKAAGATIVRDITEESDENGSVRFATLRTYGETDHTLLERKKYKGAFLPGFKPHPMPPTFFHSLPRVGLNFLDHCVGNQPDLQMAPAVEWYENILKFHRFWSVDDSMIHTEYSALRSIVVTNFEETIKMPINEPASSNKKAVSQIQEFVDYYGGSGVQHIALNTTDIITAIEALRARGCEFLSIPSSYYDNLRQRLSVSSMKIKEDMDRLQKLHILVDFDENGYLLQIFSKPCQDRPTLFLEIIQRQNHQGFGAGNFKALFESIELEQTKRGNLFYENVKDGQHK.

2 VOC domains span residues 17-148 (AFDH…LLER) and 179-339 (FLDH…IFSK). 3 residues coordinate Fe cation: His182, His267, and Glu350.

This sequence belongs to the 4HPPD family. Requires Fe cation as cofactor.

It carries out the reaction 3-(4-hydroxyphenyl)pyruvate + O2 = homogentisate + CO2. The protein operates within amino-acid degradation; L-phenylalanine degradation; acetoacetate and fumarate from L-phenylalanine: step 3/6. Functionally, key enzyme in the degradation of tyrosine. The protein is 4-hydroxyphenylpyruvate dioxygenase (hpd-1) of Caenorhabditis briggsae.